Consider the following 151-residue polypeptide: UPF0756 membrane protein Dred_1097 (151 aa).

4 consecutive transmembrane segments (helical) span residues 6–26 (IILL…LATA), 52–72 (VGLI…NIVY), 75–95 (LVMK…TLAT), and 111–131 (LIFG…GIPI).

The protein belongs to the UPF0756 family.

The protein resides in the cell membrane. The polypeptide is UPF0756 membrane protein Dred_1097 (Desulforamulus reducens (strain ATCC BAA-1160 / DSM 100696 / MI-1) (Desulfotomaculum reducens)).